We begin with the raw amino-acid sequence, 25 residues long: Chlorocatechol 1,2-dioxygenase 1 (25 aa).

It belongs to the intradiol ring-cleavage dioxygenase family. Requires Fe(3+) as cofactor.

It carries out the reaction 3,5-dichlorocatechol + O2 = (2E,4E)-2,4-dichloromuconate + 2 H(+). It participates in xenobiotic degradation; 2-(2,4-dichlorophenoxy)propanoate degradation. The sequence is that of Chlorocatechol 1,2-dioxygenase 1 (tfdC) from Delftia acidovorans (Pseudomonas acidovorans).